A 127-amino-acid polypeptide reads, in one-letter code: Small ribosomal subunit protein uS12 (127 aa).

3-methylthioaspartic acid is present on Asp-89.

This sequence belongs to the universal ribosomal protein uS12 family. As to quaternary structure, part of the 30S ribosomal subunit. Contacts proteins S8 and S17. May interact with IF1 in the 30S initiation complex.

Its function is as follows. With S4 and S5 plays an important role in translational accuracy. In terms of biological role, interacts with and stabilizes bases of the 16S rRNA that are involved in tRNA selection in the A site and with the mRNA backbone. Located at the interface of the 30S and 50S subunits, it traverses the body of the 30S subunit contacting proteins on the other side and probably holding the rRNA structure together. The combined cluster of proteins S8, S12 and S17 appears to hold together the shoulder and platform of the 30S subunit. In Campylobacter fetus subsp. fetus (strain 82-40), this protein is Small ribosomal subunit protein uS12.